Consider the following 223-residue polypeptide: Deoxyribose-phosphate aldolase (223 aa).

Catalysis depends on Asp89, which acts as the Proton donor/acceptor. Lys154 serves as the catalytic Schiff-base intermediate with acetaldehyde. Lys183 functions as the Proton donor/acceptor in the catalytic mechanism.

This sequence belongs to the DeoC/FbaB aldolase family. DeoC type 1 subfamily.

The protein resides in the cytoplasm. It catalyses the reaction 2-deoxy-D-ribose 5-phosphate = D-glyceraldehyde 3-phosphate + acetaldehyde. It participates in carbohydrate degradation; 2-deoxy-D-ribose 1-phosphate degradation; D-glyceraldehyde 3-phosphate and acetaldehyde from 2-deoxy-alpha-D-ribose 1-phosphate: step 2/2. Functionally, catalyzes a reversible aldol reaction between acetaldehyde and D-glyceraldehyde 3-phosphate to generate 2-deoxy-D-ribose 5-phosphate. The polypeptide is Deoxyribose-phosphate aldolase (Thermoanaerobacter pseudethanolicus (strain ATCC 33223 / 39E) (Clostridium thermohydrosulfuricum)).